The following is a 447-amino-acid chain: Cytochrome P450 monooxygenase aunB (447 aa).

C386 provides a ligand contact to heme.

Belongs to the cytochrome P450 family. The cofactor is heme.

The catalysed reaction is 2 fonsecin B + NADPH + O2 + H(+) = aurasperone B + NADP(+) + 2 H2O. The enzyme catalyses 2 rubrofusarin B + NADPH + O2 + H(+) = aurasperone A + NADP(+) + 2 H2O. The protein operates within secondary metabolite biosynthesis. In terms of biological role, cytochrome P450 monooxygenase; part of the gene cluster that mediates the biosynthesis of aurasperone B, a dimeric gamma-naphthopyrone. The first step in the biosynthesis of aurasperone B is the production of gamma-naphthopyrone precursor YWA1 by the non-reducing polyketide synthase albA, via condensation of one acetyl-CoA starter unit with 6 malonyl-CoA units. YWA1 is then methylated by aunE at position C-6 to yield foncesin which is further methylated at position C-8 by aunD to produce fonsecin B. A key enzyme in the biosynthetic pathway is the cytochrome P450 monooxygenase aunB which catalyzes the oxidative dimerization of fonsecin B to aurasperone B. AunB also catalyzes the oxidative dimerization of rubrofusarin B into aurasperone A. This chain is Cytochrome P450 monooxygenase aunB, found in Aspergillus niger (strain ATCC MYA-4892 / CBS 513.88 / FGSC A1513).